The sequence spans 680 residues: Methionine--tRNA ligase (680 aa).

The short motif at 14-24 (PYANGPIHLGH) is the 'HIGH' region element. Residues cysteine 145, cysteine 148, cysteine 158, and cysteine 161 each contribute to the Zn(2+) site. The short motif at 330 to 334 (KMSKS) is the 'KMSKS' region element. Lysine 333 provides a ligand contact to ATP. The tRNA-binding domain occupies 579-680 (DFAKVDFRIA…DGAQPGMRVK (102 aa)).

Belongs to the class-I aminoacyl-tRNA synthetase family. MetG type 1 subfamily. Homodimer. It depends on Zn(2+) as a cofactor.

The protein localises to the cytoplasm. The enzyme catalyses tRNA(Met) + L-methionine + ATP = L-methionyl-tRNA(Met) + AMP + diphosphate. Is required not only for elongation of protein synthesis but also for the initiation of all mRNA translation through initiator tRNA(fMet) aminoacylation. In Hydrogenovibrio crunogenus (strain DSM 25203 / XCL-2) (Thiomicrospira crunogena), this protein is Methionine--tRNA ligase.